Consider the following 75-residue polypeptide: MATKKKTFEEAIAELETIVEALENGSASLEDSLDMYQKGIELTKLCQDKLQSAEQRMAKVVTEAGEEIPFEADGE.

Belongs to the XseB family. Heterooligomer composed of large and small subunits.

Its subcellular location is the cytoplasm. The enzyme catalyses Exonucleolytic cleavage in either 5'- to 3'- or 3'- to 5'-direction to yield nucleoside 5'-phosphates.. In terms of biological role, bidirectionally degrades single-stranded DNA into large acid-insoluble oligonucleotides, which are then degraded further into small acid-soluble oligonucleotides. This is Exodeoxyribonuclease 7 small subunit from Listeria innocua serovar 6a (strain ATCC BAA-680 / CLIP 11262).